The following is a 458-amino-acid chain: Cysteine--tRNA ligase (458 aa).

Cys27 contributes to the Zn(2+) binding site. Positions 29–39 (ITPQSEPHIGH) match the 'HIGH' region motif. Zn(2+) contacts are provided by Cys207, His232, and Glu236. The short motif at 265-269 (KMSKS) is the 'KMSKS' region element. Residue Lys268 coordinates ATP.

It belongs to the class-I aminoacyl-tRNA synthetase family. As to quaternary structure, monomer. It depends on Zn(2+) as a cofactor.

It localises to the cytoplasm. The enzyme catalyses tRNA(Cys) + L-cysteine + ATP = L-cysteinyl-tRNA(Cys) + AMP + diphosphate. The polypeptide is Cysteine--tRNA ligase (Dehalococcoides mccartyi (strain ATCC BAA-2266 / KCTC 15142 / 195) (Dehalococcoides ethenogenes (strain 195))).